The sequence spans 177 residues: Large ribosomal subunit protein uL6 (177 aa).

The protein belongs to the universal ribosomal protein uL6 family. Part of the 50S ribosomal subunit.

Its function is as follows. This protein binds to the 23S rRNA, and is important in its secondary structure. It is located near the subunit interface in the base of the L7/L12 stalk, and near the tRNA binding site of the peptidyltransferase center. The polypeptide is Large ribosomal subunit protein uL6 (Nitrosospira multiformis (strain ATCC 25196 / NCIMB 11849 / C 71)).